Here is a 240-residue protein sequence, read N- to C-terminus: Probable transcriptional regulatory protein HPP12_0160 (240 aa).

This sequence belongs to the TACO1 family.

It localises to the cytoplasm. This chain is Probable transcriptional regulatory protein HPP12_0160, found in Helicobacter pylori (strain P12).